Here is a 194-residue protein sequence, read N- to C-terminus: Large ribosomal subunit protein bL25B (194 aa).

The protein belongs to the bacterial ribosomal protein bL25 family. CTC subfamily. In terms of assembly, part of the 50S ribosomal subunit; part of the 5S rRNA/L5/L18/L25 subcomplex. Contacts the 5S rRNA. Binds to the 5S rRNA independently of L5 and L18.

This is one of the proteins that binds to the 5S RNA in the ribosome where it forms part of the central protuberance. This Symbiobacterium thermophilum (strain DSM 24528 / JCM 14929 / IAM 14863 / T) protein is Large ribosomal subunit protein bL25B.